A 323-amino-acid polypeptide reads, in one-letter code: Putative divalent cation/proton antiporter TMEM165 (323 aa).

The first 33 residues, 1–33 (MAASARGSGRAPTRRLLVLLLLPLLWAPAGVRA), serve as a signal peptide directing secretion. Topologically, residues 34-88 (GPEEDLSHRNQEPPAPAQQLQPQPAAVQGLEPARAEKGFTPAAPVHTNREDAATQ) are lumenal. The span at 35–44 (PEEDLSHRNQ) shows a compositional bias: basic and acidic residues. Positions 35–60 (PEEDLSHRNQEPPAPAQQLQPQPAAV) are disordered. Residues 50 to 59 (AQQLQPQPAA) show a composition bias toward low complexity. A helical membrane pass occupies residues 89 to 109 (ANLGFIHAFVAAISVIIVSEL). The Cytoplasmic portion of the chain corresponds to 110-126 (GDKTFFIAAIMAMRYNR). Residues 127 to 147 (LTVLAGAMLALALMTCLSVLF) traverse the membrane as a helical segment. Residues 148–151 (GYAT) lie on the Lumenal side of the membrane. Residues 152–172 (TVIPRVYTYYVSTALFAIFGI) form a helical membrane-spanning segment. At 173-227 (RMLREGLKMSPDEGQEELEEVQAELKKKDEEFQRTKLLNGPDVETGTSTAIPQKK) the chain is on the cytoplasmic side. A coiled-coil region spans residues 184 to 211 (DEGQEELEEVQAELKKKDEEFQRTKLLN). Residues 228–248 (WLHFISPIFVQALTLTFLAEW) form a helical membrane-spanning segment. Residues 249-266 (GDRSQLTTIVLAAREDPY) are Lumenal-facing. A helical transmembrane segment spans residues 267-287 (GVAVGGTVGHCLCTGLAVIGG). At 288–298 (RMIAQKISVRT) the chain is on the cytoplasmic side. Residues 299-319 (VTIIGGIVFLAFAFSALFISP) form a helical membrane-spanning segment. Topologically, residues 320-323 (ESGF) are lumenal.

This sequence belongs to the GDT1 family.

The protein localises to the golgi apparatus membrane. It carries out the reaction Ca(2+)(in) + n H(+)(out) = Ca(2+)(out) + n H(+)(in). The enzyme catalyses Mn(2+)(in) + n H(+)(out) = Mn(2+)(out) + n H(+)(in). Its function is as follows. Putative divalent cation:proton antiporter that exchanges calcium or manganese ions for protons across the Golgi membrane. Mediates the reversible transport of calcium or manganese to the Golgi lumen driven by the proton gradient and possibly the membrane potential generated by V-ATPase. Provides calcium or manganese cofactors to resident Golgi enzymes and contributes to the maintenance of an acidic luminal Golgi pH required for proper functioning of the secretory pathway. Promotes Ca(2+) storage within the Golgi lumen of the mammary epithelial cells to be then secreted into milk. The transport mechanism and stoichiometry remains to be elucidated. The chain is Putative divalent cation/proton antiporter TMEM165 from Rattus norvegicus (Rat).